The sequence spans 1178 residues: Phytochrome B (1178 aa).

Positions 1-15 (MASGSRATPTRSPSS) are enriched in polar residues. Residues 1–58 (MASGSRATPTRSPSSARPEAPRHAHHHHHHHSQSSGGSTSRAGGGGGGGGGGGGTAAT) are disordered. Over residues 23-32 (HAHHHHHHHS) the composition is skewed to basic residues. Positions 42 to 55 (AGGGGGGGGGGGGT) are enriched in gly residues. The 183-residue stretch at 267–449 (DIKLLCDTVV…AFGLQLNMEL (183 aa)) folds into the GAF domain. Cysteine 372 is a phytochromobilin binding site. PAS domains follow at residues 668-739 (VARE…LRGE) and 802-873 (DYKA…MVVI). Residues 950–1170 (YICQEIKNPL…LIVLELPQPR (221 aa)) enclose the Histidine kinase domain.

It belongs to the phytochrome family. As to quaternary structure, homodimer. In terms of processing, contains one covalently linked phytochromobilin chromophore.

Regulatory photoreceptor which exists in two forms that are reversibly interconvertible by light: the Pr form that absorbs maximally in the red region of the spectrum and the Pfr form that absorbs maximally in the far-red region. Photoconversion of Pr to Pfr induces an array of morphogenic responses, whereas reconversion of Pfr to Pr cancels the induction of those responses. Pfr controls the expression of a number of nuclear genes including those encoding the small subunit of ribulose-bisphosphate carboxylase, chlorophyll A/B binding protein, protochlorophyllide reductase, rRNA, etc. It also controls the expression of its own gene(s) in a negative feedback fashion. The polypeptide is Phytochrome B (PHYB) (Sorghum bicolor (Sorghum)).